We begin with the raw amino-acid sequence, 51 residues long: uncharacterized protein (51 aa).

The interval 1–42 is disordered; that stretch reads MKMKTNKYMNMVRPAPPRRADPEGVRDPSTMGGGPNPFLRRS.

It localises to the mitochondrion. This is an uncharacterized protein from Saccharomyces cerevisiae (strain ATCC 204508 / S288c) (Baker's yeast).